The sequence spans 309 residues: Fructosamine-3-kinase (309 aa).

N-acetylmethionine is present on Met-1. 89 to 91 (EHL) serves as a coordination point for ATP. Catalysis depends on Asp-217, which acts as the Proton acceptor.

The protein belongs to the fructosamine kinase family. Monomer. Expressed in red blood cells, brain, heart, kidney and muscle. Lower expression is observed in liver. Not expressed in lung, spleen, testis and thymus.

The catalysed reaction is N(6)-(D-fructosyl)-L-lysyl-[protein] + ATP = N(6)-(3-O-phospho-D-fructosyl)-L-lysyl-[protein] + ADP + H(+). The enzyme catalyses N(6)-D-ribulosyl-L-lysyl-[protein] + ATP = N(6)-(3-O-phospho-D-ribulosyl)-L-lysyl-[protein] + ADP + H(+). It catalyses the reaction N(6)-(D-psicosyl)-L-lysyl-[protein] + ATP = N(6)-(3-O-phospho-D-psicosyl)-L-lysyl-[protein] + ADP + H(+). Its function is as follows. Fructosamine-3-kinase involved in protein deglycation by mediating phosphorylation of fructoselysine residues on glycated proteins, to generate fructoselysine-3 phosphate. Fructoselysine-3 phosphate adducts are unstable and decompose under physiological conditions. Involved in intracellular deglycation in erythrocytes and pancreatic islets. Involved in the response to oxidative stress by mediating deglycation of NFE2L2/NRF2, glycation impairing NFE2L2/NRF2 function. Also able to phosphorylate psicosamines and ribulosamines. The polypeptide is Fructosamine-3-kinase (Mus musculus (Mouse)).